Reading from the N-terminus, the 333-residue chain is Anthranilate phosphoribosyltransferase (333 aa).

5-phospho-alpha-D-ribose 1-diphosphate is bound by residues Gly80, 83–84 (GD), Thr88, 90–93 (NLST), 108–116 (KHGNRSASG), and Ser120. Position 80 (Gly80) interacts with anthranilate. Residue Ser92 participates in Mg(2+) binding. Anthranilate is bound at residue Asn111. Arg166 lines the anthranilate pocket. Mg(2+) is bound by residues Asp224 and Glu225.

Belongs to the anthranilate phosphoribosyltransferase family. As to quaternary structure, homodimer. Mg(2+) serves as cofactor.

The enzyme catalyses N-(5-phospho-beta-D-ribosyl)anthranilate + diphosphate = 5-phospho-alpha-D-ribose 1-diphosphate + anthranilate. It participates in amino-acid biosynthesis; L-tryptophan biosynthesis; L-tryptophan from chorismate: step 2/5. Functionally, catalyzes the transfer of the phosphoribosyl group of 5-phosphorylribose-1-pyrophosphate (PRPP) to anthranilate to yield N-(5'-phosphoribosyl)-anthranilate (PRA). The protein is Anthranilate phosphoribosyltransferase of Pyrobaculum arsenaticum (strain DSM 13514 / JCM 11321 / PZ6).